Here is a 423-residue protein sequence, read N- to C-terminus: D-tagatose-1,6-bisphosphate aldolase subunit GatZ (423 aa).

Belongs to the GatZ/KbaZ family. GatZ subfamily. As to quaternary structure, forms a complex with GatY.

The protein operates within carbohydrate metabolism; D-tagatose 6-phosphate degradation; D-glyceraldehyde 3-phosphate and glycerone phosphate from D-tagatose 6-phosphate: step 2/2. In terms of biological role, component of the tagatose-1,6-bisphosphate aldolase GatYZ that is required for full activity and stability of the Y subunit. Could have a chaperone-like function for the proper and stable folding of GatY. When expressed alone, GatZ does not show any aldolase activity. Is involved in the catabolism of galactitol. The sequence is that of D-tagatose-1,6-bisphosphate aldolase subunit GatZ from Salmonella heidelberg (strain SL476).